We begin with the raw amino-acid sequence, 918 residues long: Serine/threonine-protein kinase D1 (918 aa).

Y93 is subject to Phosphotyrosine. The Phorbol-ester/DAG-type 1 zinc-finger motif lies at 144 to 194 (PHALFVHSYRAPAFCDHCGEMLWGLVRQGLKCEGCGLNYHKRCAFKIPNNC). S203, S206, S217, and S221 each carry phosphoserine. The segment at 276–326 (PHTFVIHSYTRPTVCQFCKKLLKGLFRQGLQCKDCRFNCHKRCAPKVPNNC) adopts a Phorbol-ester/DAG-type 2 zinc-finger fold. 2 disordered regions span residues 338-362 (SPGA…NSGL) and 379-410 (AEGQ…SNNI). Positions 345 to 355 (VVMEEGSDDND) are enriched in acidic residues. Residue S351 is modified to Phosphoserine. Residues 400-410 (RTISPSTSNNI) are compositionally biased toward polar residues. Residues S403 and S407 each carry the phosphoserine; by MAPK13 modification. Residues 428 to 547 (TVMKEGWMVH…WEVAIQHALM (120 aa)) enclose the PH domain. Y438 carries the post-translational modification Phosphotyrosine. S454 is modified (phosphoserine). A Phosphotyrosine; by ABL modification is found at Y469. Position 508 is a phosphotyrosine (Y508). At S554 the chain carries Phosphoserine. One can recognise a Protein kinase domain in the interval 589 to 845 (IFPDEVLGSG…VDKTLSHPWL (257 aa)). ATP is bound by residues 595–603 (LGSGQFGIV) and K618. Catalysis depends on D712, which acts as the Proton acceptor. S744 carries the post-translational modification Phosphoserine; by PKC/PRKCD. S748 carries the post-translational modification Phosphoserine; by autocatalysis and PKC/PRKCD. Y755 bears the Phosphotyrosine mark. A Phosphoserine; by autocatalysis modification is found at S916.

Belongs to the protein kinase superfamily. CAMK Ser/Thr protein kinase family. PKD subfamily. As to quaternary structure, interacts (via N-terminus) with ADAP1/CENTA1. Interacts with MAPK13. Interacts with DAPK1 in an oxidative stress-regulated manner. Interacts with USP28; the interaction induces phosphorylation of USP28 and activated KRAS-mediated stabilization of ZNF304. Interacts with AKAP13 (via C-terminal domain). Mg(2+) serves as cofactor. Phosphorylated at Ser-403 and Ser-407 by MAPK13 during regulation of insulin secretion in pancreatic beta cells. Phosphorylated by DAPK1. Phosphorylated at Tyr-93 and by ABL at Tyr-469, which primes the kinase in response to oxidative stress, and promotes a second step activating phosphorylation at Ser-744/Ser-748 by PKRD. Phosphorylated at Ser-916 upon S.enterica infection in macrophages.

The protein resides in the cytoplasm. The protein localises to the cell membrane. It localises to the golgi apparatus. Its subcellular location is the trans-Golgi network. The enzyme catalyses L-seryl-[protein] + ATP = O-phospho-L-seryl-[protein] + ADP + H(+). It catalyses the reaction L-threonyl-[protein] + ATP = O-phospho-L-threonyl-[protein] + ADP + H(+). Its activity is regulated as follows. Activated by DAG and phorbol esters. Phorbol-ester/DAG-type domain 1 binds DAG with high affinity and appears to play the dominant role in mediating translocation to the cell membrane and trans-Golgi network. Phorbol-ester/DAG-type domain 2 binds phorbol ester with higher affinity. Autophosphorylation of Ser-748 and phosphorylation of Ser-744 by PKC relieves auto-inhibition by the PH domain. Phosphorylation on Tyr-469 by the SRC-ABL1 pathway in response to oxidative stress, is also required for activation. Activated by DAPK1 under oxidative stress. In terms of biological role, serine/threonine-protein kinase that converts transient diacylglycerol (DAG) signals into prolonged physiological effects downstream of PKC, and is involved in the regulation of MAPK8/JNK1 and Ras signaling, Golgi membrane integrity and trafficking, cell survival through NF-kappa-B activation, cell migration, cell differentiation by mediating HDAC7 nuclear export, cell proliferation via MAPK1/3 (ERK1/2) signaling, and plays a role in cardiac hypertrophy, VEGFA-induced angiogenesis, genotoxic-induced apoptosis and flagellin-stimulated inflammatory response. Phosphorylates the epidermal growth factor receptor (EGFR) on dual threonine residues, which leads to the suppression of epidermal growth factor (EGF)-induced MAPK8/JNK1 activation and subsequent JUN phosphorylation. Phosphorylates RIN1, inducing RIN1 binding to 14-3-3 proteins YWHAB, YWHAE and YWHAZ and increased competition with RAF1 for binding to GTP-bound form of Ras proteins (NRAS, HRAS and KRAS). Acts downstream of the heterotrimeric G-protein beta/gamma-subunit complex to maintain the structural integrity of the Golgi membranes, and is required for protein transport along the secretory pathway. In the trans-Golgi network (TGN), regulates the fission of transport vesicles that are on their way to the plasma membrane. May act by activating the lipid kinase phosphatidylinositol 4-kinase beta (PI4KB) at the TGN for the local synthesis of phosphorylated inositol lipids, which induces a sequential production of DAG, phosphatidic acid (PA) and lyso-PA (LPA) that are necessary for membrane fission and generation of specific transport carriers to the cell surface. Under oxidative stress, is phosphorylated at Tyr-469 via SRC-ABL1 and contributes to cell survival by activating IKK complex and subsequent nuclear translocation and activation of NFKB1. Involved in cell migration by regulating integrin alpha-5/beta-3 recycling and promoting its recruitment in newly forming focal adhesion. In osteoblast differentiation, mediates the bone morphogenetic protein 2 (BMP2)-induced nuclear export of HDAC7, which results in the inhibition of HDAC7 transcriptional repression of RUNX2. In neurons, plays an important role in neuronal polarity by regulating the biogenesis of TGN-derived dendritic vesicles, and is involved in the maintenance of dendritic arborization and Golgi structure in hippocampal cells. May potentiate mitogenesis induced by the neuropeptide bombesin or vasopressin by mediating an increase in the duration of MAPK1/3 (ERK1/2) signaling, which leads to accumulation of immediate-early gene products including FOS that stimulate cell cycle progression. Plays an important role in the proliferative response induced by low calcium in keratinocytes, through sustained activation of MAPK1/3 (ERK1/2) pathway. Downstream of novel PKC signaling, plays a role in cardiac hypertrophy by phosphorylating HDAC5, which in turn triggers XPO1/CRM1-dependent nuclear export of HDAC5, MEF2A transcriptional activation and induction of downstream target genes that promote myocyte hypertrophy and pathological cardiac remodeling. Mediates cardiac troponin I (TNNI3) phosphorylation at the PKA sites, which results in reduced myofilament calcium sensitivity, and accelerated crossbridge cycling kinetics. The PRKD1-HDAC5 pathway is also involved in angiogenesis by mediating VEGFA-induced specific subset of gene expression, cell migration, and tube formation. In response to VEGFA, is necessary and required for HDAC7 phosphorylation which induces HDAC7 nuclear export and endothelial cell proliferation and migration. During apoptosis induced by cytarabine and other genotoxic agents, PRKD1 is cleaved by caspase-3 at Asp-378, resulting in activation of its kinase function and increased sensitivity of cells to the cytotoxic effects of genotoxic agents. In epithelial cells, is required for transducing flagellin-stimulated inflammatory responses by binding and phosphorylating TLR5, which contributes to MAPK14/p38 activation and production of inflammatory cytokines. Acts as an activator of NLRP3 inflammasome assembly by mediating phosphorylation of NLRP3. May play a role in inflammatory response by mediating activation of NF-kappa-B. May be involved in pain transmission by directly modulating TRPV1 receptor. Plays a role in activated KRAS-mediated stabilization of ZNF304 in colorectal cancer (CRC) cells. Regulates nuclear translocation of transcription factor TFEB in macrophages upon live S.enterica infection. The sequence is that of Serine/threonine-protein kinase D1 (Prkd1) from Mus musculus (Mouse).